Here is a 289-residue protein sequence, read N- to C-terminus: Ribonuclease Z (289 aa).

Positions 63, 65, 67, 68, 143, 197, and 255 each coordinate Zn(2+). The active-site Proton acceptor is Asp-67.

This sequence belongs to the RNase Z family. Homodimer. The cofactor is Zn(2+).

The enzyme catalyses Endonucleolytic cleavage of RNA, removing extra 3' nucleotides from tRNA precursor, generating 3' termini of tRNAs. A 3'-hydroxy group is left at the tRNA terminus and a 5'-phosphoryl group is left at the trailer molecule.. Its function is as follows. Zinc phosphodiesterase, which displays some tRNA 3'-processing endonuclease activity. Probably involved in tRNA maturation, by removing a 3'-trailer from precursor tRNA. This is Ribonuclease Z from Azobacteroides pseudotrichonymphae genomovar. CFP2.